Reading from the N-terminus, the 95-residue chain is Co-chaperonin GroES (95 aa).

The protein belongs to the GroES chaperonin family. Heptamer of 7 subunits arranged in a ring. Interacts with the chaperonin GroEL.

Its subcellular location is the cytoplasm. In terms of biological role, together with the chaperonin GroEL, plays an essential role in assisting protein folding. The GroEL-GroES system forms a nano-cage that allows encapsulation of the non-native substrate proteins and provides a physical environment optimized to promote and accelerate protein folding. GroES binds to the apical surface of the GroEL ring, thereby capping the opening of the GroEL channel. The chain is Co-chaperonin GroES from Chlorobium phaeobacteroides (strain DSM 266 / SMG 266 / 2430).